A 161-amino-acid chain; its full sequence is UPF0763 protein Cla_1130 (161 aa).

Belongs to the UPF0763 family.

This Campylobacter lari (strain RM2100 / D67 / ATCC BAA-1060) protein is UPF0763 protein Cla_1130.